The sequence spans 378 residues: Chaperone protein DnaJ (378 aa).

The region spanning 5-69 (EFYDRLGVSK…QKRAAYDQYG (65 aa)) is the J domain. The CR-type zinc finger occupies 135–217 (GTEKEVKYHR…CHGTGHEKQA (83 aa)). Residues Cys148, Cys151, Cys165, Cys168, Cys191, Cys194, Cys205, and Cys208 each contribute to the Zn(2+) site. 4 CXXCXGXG motif repeats span residues 148–155 (CRTCNGSG), 165–172 (CGRCHGAG), 191–198 (CDVCHGRG), and 205–212 (CTTCHGTG).

Belongs to the DnaJ family. Homodimer. Requires Zn(2+) as cofactor.

The protein resides in the cytoplasm. Its function is as follows. Participates actively in the response to hyperosmotic and heat shock by preventing the aggregation of stress-denatured proteins and by disaggregating proteins, also in an autonomous, DnaK-independent fashion. Unfolded proteins bind initially to DnaJ; upon interaction with the DnaJ-bound protein, DnaK hydrolyzes its bound ATP, resulting in the formation of a stable complex. GrpE releases ADP from DnaK; ATP binding to DnaK triggers the release of the substrate protein, thus completing the reaction cycle. Several rounds of ATP-dependent interactions between DnaJ, DnaK and GrpE are required for fully efficient folding. Also involved, together with DnaK and GrpE, in the DNA replication of plasmids through activation of initiation proteins. In Streptococcus pneumoniae serotype 4 (strain ATCC BAA-334 / TIGR4), this protein is Chaperone protein DnaJ.